The following is a 70-amino-acid chain: Cold shock-like protein CspG (70 aa).

In terms of domain architecture, CSD spans 7 to 67; it reads GLVKWFNADK…GQRGPAAANV (61 aa).

It is found in the cytoplasm. This chain is Cold shock-like protein CspG (cspG), found in Escherichia coli O157:H7.